We begin with the raw amino-acid sequence, 78 residues long: UPF0335 protein RrIowa_0193 (78 aa).

It belongs to the UPF0335 family.

The chain is UPF0335 protein RrIowa_0193 from Rickettsia rickettsii (strain Iowa).